The sequence spans 129 residues: Small ribosomal subunit protein uS8 (129 aa).

This sequence belongs to the universal ribosomal protein uS8 family. In terms of assembly, part of the 30S ribosomal subunit.

One of the primary rRNA binding proteins, it binds directly to 16S rRNA central domain where it helps coordinate assembly of the platform of the 30S subunit. This is Small ribosomal subunit protein uS8 from Nanoarchaeum equitans (strain Kin4-M).